Reading from the N-terminus, the 305-residue chain is tRNA pseudouridine synthase B (305 aa).

The active-site Nucleophile is aspartate 41.

The protein belongs to the pseudouridine synthase TruB family. Type 1 subfamily.

The catalysed reaction is uridine(55) in tRNA = pseudouridine(55) in tRNA. Functionally, responsible for synthesis of pseudouridine from uracil-55 in the psi GC loop of transfer RNAs. The polypeptide is tRNA pseudouridine synthase B (Prochlorococcus marinus (strain MIT 9301)).